A 189-amino-acid chain; its full sequence is Peptidyl-tRNA hydrolase (189 aa).

Residue Tyr-15 coordinates tRNA. The active-site Proton acceptor is His-20. 3 residues coordinate tRNA: Tyr-65, Asn-67, and Asn-113.

The protein belongs to the PTH family. In terms of assembly, monomer.

It localises to the cytoplasm. It carries out the reaction an N-acyl-L-alpha-aminoacyl-tRNA + H2O = an N-acyl-L-amino acid + a tRNA + H(+). Hydrolyzes ribosome-free peptidyl-tRNAs (with 1 or more amino acids incorporated), which drop off the ribosome during protein synthesis, or as a result of ribosome stalling. Its function is as follows. Catalyzes the release of premature peptidyl moieties from peptidyl-tRNA molecules trapped in stalled 50S ribosomal subunits, and thus maintains levels of free tRNAs and 50S ribosomes. This chain is Peptidyl-tRNA hydrolase, found in Caldicellulosiruptor bescii (strain ATCC BAA-1888 / DSM 6725 / KCTC 15123 / Z-1320) (Anaerocellum thermophilum).